An 88-amino-acid chain; its full sequence is MEVSQSQLDLKIKYLKLKRINELNDKLRDELQRERITASNACLQLIAYTTSTRDYALPTLWGYPPADTNHFRDFQTQHADDATCCTIM.

Cys-84 is lipidated: S-palmitoyl cysteine. Cys-85 is subject to Cysteine methyl ester. A lipid anchor (S-farnesyl cysteine) is attached at Cys-85. Positions 86–88 are cleaved as a propeptide — removed in mature form; that stretch reads TIM.

This sequence belongs to the G protein gamma family. In terms of assembly, g proteins are composed of 3 units, alpha, beta and gamma.

Its subcellular location is the membrane. This Candida glabrata (strain ATCC 2001 / BCRC 20586 / JCM 3761 / NBRC 0622 / NRRL Y-65 / CBS 138) (Yeast) protein is Guanine nucleotide-binding protein subunit gamma.